The primary structure comprises 996 residues: Phototropin-1 (996 aa).

Residues 1-184 form a disordered region; it reads MEPTEKPSTK…PGGRSGIPRV (184 aa). Phosphoserine occurs at positions 23 and 58. The span at 49-59 shows a compositional bias: polar residues; sequence QNLSDPRGTSP. A compositionally biased stretch (pro residues) spans 60-70; that stretch reads QPRPQQEPAPS. Over residues 141–153 the composition is skewed to polar residues; it reads SGGTENDPNGKKT. The segment covering 155 to 166 has biased composition (low complexity); sequence SQRNSQNSCRSS. The 74-residue stretch at 184 to 257 folds into the PAS 1 domain; sequence VSEDLKDALS…AKIRETLAAG (74 aa). S185 is subject to Phosphoserine. N233 contributes to the FMN binding site. C234 bears the S-4a-FMN cysteine mark. Residues R235, Q238, R251, N266, N276, Q297, and K302 each coordinate FMN. The 55-residue stretch at 258–312 folds into the PAC 1 domain; that stretch reads NNYCGRILNYKKDGTSFWNLLTIAPIKDESGKVLKFIGMQVEVSKHTEGAKEKAL. 3 positions are modified to phosphoserine: S350, S376, and S410. Disordered regions lie at residues 351-413 and 434-453; these read ESTN…SLSF and YGEEDDEISDRDERPESVDD. Residues 434–443 show a composition bias toward acidic residues; that stretch reads YGEEDDEISD. Residues 444 to 453 show a composition bias toward basic and acidic residues; it reads RDERPESVDD. S450 is modified (phosphoserine). One can recognise a PAS 2 domain in the interval 462–535; that stretch reads KGIDLATTLE…KKIRNAIDNQ (74 aa). N511 lines the FMN pocket. C512 carries the S-4a-FMN cysteine modification. FMN is bound by residues R513, Q516, R529, N544, N554, F556, and Q575. A PAC 2 domain is found at 536–590; it reads TEVTVQLINYTKSGKKFWNIFHLQPMRDQKGEVQYFIGVQLDGSKHVEPVRNVIE. The region spanning 663–952 is the Protein kinase domain; the sequence is FKPVKPLGSG…ANEVKQHSFF (290 aa). ATP-binding positions include 669–677 and K692; that span reads LGSGDTGSV. D788 functions as the Proton acceptor in the catalytic mechanism. The segment at 806–862 is activation loop; the sequence is DFDLSCLTSCKPQLLIPSIDEKKKKKQQKSQQTPIFMAEPMRASNSFVGTEEYIAPE.

The protein belongs to the protein kinase superfamily. AGC Ser/Thr protein kinase family. As to quaternary structure, homodimer; disulfide-linked. Interacts with PKS1, PKS2, RPT2, RPT3, PHOT2 and BLUS1. Subunit of a complex made of CAR6, PHOT1 and RPT3/NPH3. Associates with CBC1 and CBC2. Binds to BHP. FMN is required as a cofactor. Post-translationally, autophosphorylated at Ser-185, Ser-350 and Ser-410 in response to blue light irradiation. In terms of processing, 2 molecules of FMN bind covalently to cysteines after exposure to blue light and are reversed in the dark. In terms of tissue distribution, present in guard cells (at protein level).

The protein resides in the cell membrane. The protein localises to the cytoplasm. It catalyses the reaction L-seryl-[protein] + ATP = O-phospho-L-seryl-[protein] + ADP + H(+). The enzyme catalyses L-threonyl-[protein] + ATP = O-phospho-L-threonyl-[protein] + ADP + H(+). With respect to regulation, autophosphorylation is inhibited by staurosporine, but not by tyrphostin 9, sphingosine, GW5074 and BML-265. Functionally, protein kinase that acts as a blue light (BL) photoreceptor in a signal-transduction pathway for photo-induced movements. Triggers the phosphorylation of AHA1 and AHA2 C-terminal penultimate Thr in guard cells to activate them and induce stomatal opening in response to blue light (BL). Also phosphorylates BLUS1, a kinase involved in stomatal opening. Mediates the phosphorylation of CBC1 in stomata, but not of CBC2, in response to blue light. Required for blue light mediated mRNA destabilization. Mediates calcium spiking of extracellular origin in response to a low rate of blue light. Also mediates rapid membrane depolarization and growth inhibition in response to blue light. Necessary for root phototropism. Involved in hypocotyl phototropism under a low rate but not under a high rate of blue light. Contributes to the chloroplast accumulation but seems not to be required for chloroplast translocation. Regulates stomata opening and photomorphogenesis response of leaf tissue. Confers sensitivity to drought. Not involved in hypocotyl elongation inhibition, anthocyanin accumulation or cotyledon opening. Involved in the regulation of leaf position and morphology via the phosphorylation of ABCB19 during blue light responses to modulate auxin distribution. The protein is Phototropin-1 of Arabidopsis thaliana (Mouse-ear cress).